A 451-amino-acid polypeptide reads, in one-letter code: MKRTIQETPGPSSTTVPPPKKLNSQRNGSNLEPGSIYFTPIGGISVPRQESESSRSLDEILADIRPINSLHFSFMLDFEFLIGSYPPSLREYPITLVVGAPDAPDLLKCTKNQKLVTVVGASLPIPFGTHHTKMSILEDEDGRFHVIVSTANLVPDDWEFKTQQFYYNFGVKIASGTVPRSDFQDDLLEYLSMYRNQLDTWKQLLQKVDFSQISDRLIFSTPGYHTDPPTQRPGHPRLFRILSEKFPFDASYEHTERCTFVAQCSSIGSLGSAPINWFRGQFLQSLEGANPSPKQKPAKMYLVFPSVEDVRTSCQGYAGGCSVPYRNSVHARQKWLQGNMCKWRSNAKRRTNAVPHCKTYVKYDKKVAIWQLLTSANLSKAAWGEVSFNKSKNVEQLMIRSWEMGVLITDPSRFNIPFDYPLVPYSATDEPFVTDKKHEKPDILGCIWTPP.

Residues 1 to 34 (MKRTIQETPGPSSTTVPPPKKLNSQRNGSNLEPG) are disordered. Over residues 22-32 (LNSQRNGSNLE) the composition is skewed to polar residues. The Nucleophile role is filled by histidine 131. Lysine 133 contacts substrate. An interaction with DNA region spans residues 266–269 (SIGS). Histidine 356 serves as the catalytic Proton donor/acceptor. Lysine 358 contributes to the substrate binding site.

It belongs to the tyrosyl-DNA phosphodiesterase family.

Its subcellular location is the nucleus. Functionally, DNA repair enzyme that can remove a variety of covalent adducts from DNA through hydrolysis of a 3'-phosphodiester bond, giving rise to DNA with a free 3' phosphate. Catalyzes the hydrolysis of dead-end complexes between DNA and the topoisomerase I active site tyrosine residue. Hydrolyzes 3'-phosphoglycolates on protruding 3' ends on DNA double-strand breaks due to DNA damage by radiation and free radicals. Acts on blunt-ended double-strand DNA breaks and on single-stranded DNA. May have low 3'exonuclease activity and may be able to remove a single nucleoside from the 3'end of DNA and RNA molecules with 3'hydroxyl groups. Has no exonuclease activity towards DNA or RNA with a 3'phosphate. This chain is Probable tyrosyl-DNA phosphodiesterase, found in Caenorhabditis elegans.